A 248-amino-acid polypeptide reads, in one-letter code: 23S rRNA (guanosine-2'-O-)-methyltransferase RlmB (248 aa).

S-adenosyl-L-methionine-binding residues include glycine 200, isoleucine 220, and leucine 229.

It belongs to the class IV-like SAM-binding methyltransferase superfamily. RNA methyltransferase TrmH family. RlmB subfamily.

The protein localises to the cytoplasm. It catalyses the reaction guanosine(2251) in 23S rRNA + S-adenosyl-L-methionine = 2'-O-methylguanosine(2251) in 23S rRNA + S-adenosyl-L-homocysteine + H(+). In terms of biological role, specifically methylates the ribose of guanosine 2251 in 23S rRNA. The sequence is that of 23S rRNA (guanosine-2'-O-)-methyltransferase RlmB from Acinetobacter baylyi (strain ATCC 33305 / BD413 / ADP1).